Reading from the N-terminus, the 212-residue chain is Adenylate kinase (212 aa).

Residue 10–15 (GAGKGT) participates in ATP binding. Positions 30–59 (STGDMFRAAMANQTEMGRLAKSYIDKGELV) are NMP. AMP is bound by residues Thr-31, Arg-36, 57–59 (ELV), 86–89 (GYPR), and Gln-93. The LID stretch occupies residues 127–159 (GRIINRKTGETFHKVFNPPVDYKEEDYYQREDD). ATP contacts are provided by residues Arg-128 and 137–138 (TF). Residues Arg-156 and Arg-167 each coordinate AMP. Residue Gln-195 participates in ATP binding.

The protein belongs to the adenylate kinase family. As to quaternary structure, monomer.

The protein resides in the cytoplasm. The enzyme catalyses AMP + ATP = 2 ADP. It functions in the pathway purine metabolism; AMP biosynthesis via salvage pathway; AMP from ADP: step 1/1. Functionally, catalyzes the reversible transfer of the terminal phosphate group between ATP and AMP. Plays an important role in cellular energy homeostasis and in adenine nucleotide metabolism. This chain is Adenylate kinase, found in Streptococcus pyogenes serotype M12 (strain MGAS2096).